The primary structure comprises 260 residues: Exosome complex component Rrp42 (260 aa).

This sequence belongs to the RNase PH family. Rrp42 subfamily. Component of the archaeal exosome complex. Forms a hexameric ring-like arrangement composed of 3 Rrp41-Rrp42 heterodimers. The hexameric ring associates with a trimer of Rrp4 and/or Csl4 subunits.

It is found in the cytoplasm. Non-catalytic component of the exosome, which is a complex involved in RNA degradation. Contributes to the structuring of the Rrp41 active site. The polypeptide is Exosome complex component Rrp42 (Thermoplasma volcanium (strain ATCC 51530 / DSM 4299 / JCM 9571 / NBRC 15438 / GSS1)).